The primary structure comprises 392 residues: MEIVQEGIAKIIVPEIPKTVSSDMPVFYNPRMRVNRDLAVLGLEYLCKKLGRPVKVADPLSASGIRAIRFLLETSCVEKAYANDISSKAIEIMKENFKLNNIPEDRYEIHGMEANFFLRKEWGFGFDYVDLDPFGTPVPFIESVALSMKRGGILSLTATDTAPLSGTYPKTCMRRYMARPLRNEFKHEVGIRILIKKVIELAAQYDIAMIPIFAYSHLHYFKLFFVKERGVEKVDKLIEQFGYIQYCFNCMNREVVTDLYKFKEKCPHCGSKFHIGGPLWIGKLWDEEFTNFLYEEAQKREEIEKETKRILKLIKEESQLQTVGFYVLSKLAEKVKLPAQPPIRIAVKFFNGVRTHFVGDGFRTNLSFEEVMKKMEELKEKQKEFLEKKKQG.

A Trm1 methyltransferase domain is found at 2–375; sequence EIVQEGIAKI…LSFEEVMKKM (374 aa). Positions 36, 66, 84, 113, and 114 each coordinate S-adenosyl-L-methionine. Residues Cys247, Cys250, Cys266, and Cys269 each coordinate Zn(2+).

It belongs to the class I-like SAM-binding methyltransferase superfamily. Trm1 family.

It catalyses the reaction guanosine(26)/guanosine(27) in tRNA + 4 S-adenosyl-L-methionine = N(2)-dimethylguanosine(26)/N(2)-dimethylguanosine(27) in tRNA + 4 S-adenosyl-L-homocysteine + 4 H(+). Its function is as follows. Dimethylates the guanine residues at position 26 and 27 of one or more tRNAs using S-adenosyl-L-methionine as donor of the methyl groups. The sequence is that of tRNA (guanine(26)-N(2)/guanine(27)-N(2))-dimethyltransferase from Aquifex aeolicus (strain VF5).